We begin with the raw amino-acid sequence, 269 residues long: Putative aga operon transcriptional repressor (269 aa).

In terms of domain architecture, HTH deoR-type spans 15–70; it reads TSERREQIIQRLRQQGSVQVNDLSALYGVSTVTIRNDLAFLEKQGIAVRAYGGALI. A DNA-binding region (H-T-H motif) is located at residues 32–51; the sequence is VQVNDLSALYGVSTVTIRND.

Functionally, probable repressor for the aga operon for N-acetyl galactosamine transport and metabolism. In Escherichia coli O157:H7, this protein is Putative aga operon transcriptional repressor (agaR).